A 209-amino-acid chain; its full sequence is N-(5'-phosphoribosyl)anthranilate isomerase (209 aa).

The protein belongs to the TrpF family.

The catalysed reaction is N-(5-phospho-beta-D-ribosyl)anthranilate = 1-(2-carboxyphenylamino)-1-deoxy-D-ribulose 5-phosphate. It participates in amino-acid biosynthesis; L-tryptophan biosynthesis; L-tryptophan from chorismate: step 3/5. The polypeptide is N-(5'-phosphoribosyl)anthranilate isomerase (Erythrobacter litoralis (strain HTCC2594)).